Consider the following 83-residue polypeptide: Exodeoxyribonuclease 7 small subunit (83 aa).

Belongs to the XseB family. In terms of assembly, heterooligomer composed of large and small subunits.

Its subcellular location is the cytoplasm. It catalyses the reaction Exonucleolytic cleavage in either 5'- to 3'- or 3'- to 5'-direction to yield nucleoside 5'-phosphates.. In terms of biological role, bidirectionally degrades single-stranded DNA into large acid-insoluble oligonucleotides, which are then degraded further into small acid-soluble oligonucleotides. This chain is Exodeoxyribonuclease 7 small subunit, found in Bradyrhizobium diazoefficiens (strain JCM 10833 / BCRC 13528 / IAM 13628 / NBRC 14792 / USDA 110).